The following is a 448-amino-acid chain: T-box transcription factor T homolog 1 (448 aa).

Residues 54–224 constitute a DNA-binding region (T-box); sequence LWDKFNALTN…YNPFAKAFLD (171 aa). Disordered stretches follow at residues 290–312 and 401–448; these read APYP…TAAS and TTAS…PPSL. Polar residues predominate over residues 417–442; sequence STDSGYGHSTTPPAPQTRITSNNWSP.

The protein resides in the nucleus. In terms of biological role, involved in the transcriptional regulation of genes required for mesoderm formation and differentiation. This is T-box transcription factor T homolog 1 from Branchiostoma floridae (Florida lancelet).